The following is a 519-amino-acid chain: Cytosol aminopeptidase (519 aa).

Position 42 is a phosphoserine (Ser-42). Lys-45 is modified (N6-succinyllysine). A Phosphoserine modification is found at Ser-54. An N6-succinyllysine mark is found at Lys-61 and Lys-103. Residues Ser-180 and Ser-194 each carry the phosphoserine modification. 2 residues coordinate Zn(2+): Leu-202 and Met-203. Residue Lys-221 is modified to N6-acetyllysine; alternate. Residue Lys-221 is modified to N6-succinyllysine; alternate. A Phosphoserine modification is found at Ser-238. Zn(2+) is bound by residues Lys-282 and Asp-287. Positions 282, 287, 292, and 294 each coordinate substrate. Asp-287 lines the Mg(2+) pocket. The active site involves Lys-294. Residues Arg-303, Asp-305, Asp-364, and Glu-366 each coordinate Zn(2+). Substrate contacts are provided by Asp-305 and Asp-364. Mg(2+) is bound by residues Asp-364 and Glu-366. The active site involves Arg-368. The residue at position 455 (Lys-455) is an N6-acetyllysine; alternate. Lys-455 is subject to N6-succinyllysine; alternate. Residue Lys-476 is modified to N6-succinyllysine. Lys-489 is modified (N6-acetyllysine; alternate). The residue at position 489 (Lys-489) is an N6-succinyllysine; alternate.

Belongs to the peptidase M17 family. In terms of assembly, homohexamer. Requires Zn(2+) as cofactor. Mn(2+) is required as a cofactor.

Its subcellular location is the cytoplasm. It carries out the reaction Release of an N-terminal amino acid, Xaa-|-Yaa-, in which Xaa is preferably Leu, but may be other amino acids including Pro although not Arg or Lys, and Yaa may be Pro. Amino acid amides and methyl esters are also readily hydrolyzed, but rates on arylamides are exceedingly low.. The catalysed reaction is an S-substituted L-cysteinylglycine + H2O = an S-substituted L-cysteine + glycine. The enzyme catalyses L-cysteinylglycine + H2O = L-cysteine + glycine. It catalyses the reaction S-benzyl-L-cysteinylglycine + H2O = S-benzyl-L-cysteine + glycine. It carries out the reaction Release of N-terminal proline from a peptide.. With respect to regulation, bimane-S-cysteinylglycine-hydrolyzing activity is inhibited by o-phenanthroline or bestatin, and is activated by the addition of zinc chloride. In terms of biological role, cytosolic metallopeptidase that catalyzes the removal of unsubstituted N-terminal hydrophobic amino acids from various peptides. The presence of Zn(2+) ions is essential for the peptidase activity, and the association with other cofactors can modulate the substrate spectificity of the enzyme. For instance, in the presence of Mn(2+), it displays a specific Cys-Gly hydrolyzing activity of Cys-Gly-S-conjugates. Involved in the metabolism of glutathione and in the degradation of glutathione S-conjugates, which may play a role in the control of the cell redox status. In Rattus norvegicus (Rat), this protein is Cytosol aminopeptidase.